Consider the following 201-residue polypeptide: Oligoribonuclease (201 aa).

Positions 5–169 (MVWIDCEMTG…ADIRDSITEL (165 aa)) constitute an Exonuclease domain. Residue Tyr126 is part of the active site.

This sequence belongs to the oligoribonuclease family.

It is found in the cytoplasm. Functionally, 3'-to-5' exoribonuclease specific for small oligoribonucleotides. In Streptomyces griseus, this protein is Oligoribonuclease.